Here is a 548-residue protein sequence, read N- to C-terminus: Tau-cadinol synthase (548 aa).

Mg(2+)-binding residues include aspartate 303 and aspartate 307. 3 residues coordinate substrate: aspartate 303, aspartate 307, and arginine 443. The DDXXD motif motif lies at 303–307 (DDTYD).

Belongs to the terpene synthase family. In terms of assembly, monomer. The cofactor is Mg(2+). It depends on Mn(2+) as a cofactor. In terms of tissue distribution, constitutively expressed in aerial tissues, but barely observed in roots.

The protein resides in the cytoplasm. It catalyses the reaction (2E,6E)-farnesyl diphosphate + H2O = tau-cadinol + diphosphate. It functions in the pathway secondary metabolite biosynthesis; terpenoid biosynthesis. Sesquiterpene synthase that catalyzes the formation of a blend of sesquiterpenes and sesquiterpenoid alcohols. Converts farnesyl diphosphate to tau-cadinol. This is Tau-cadinol synthase from Zea mays (Maize).